The following is a 106-amino-acid chain: Insulin-like peptide 04 (106 aa).

The N-terminal stretch at 1–22 (MPRTFLVVLIYILAGFLCSTSA) is a signal peptide. A propeptide spanning residues 23–37 (LRKVNEASGIKTDGS) is cleaved from the precursor. 3 disulfides stabilise this stretch: Cys45–Cys50, Cys46–Cys80, and Cys59–Cys68. Positions 86–106 (RRKRSLTVDKREAKKFIRQRR) are cleaved as a propeptide — c peptide.

This sequence belongs to the insulin family.

The protein localises to the secreted. In terms of biological role, insulin decreases blood glucose concentration. May have evolved to activate insulin receptors (INSR) in vertebrates. Molecular docking studies reveals unique interaction with the human insulin receptor. In vivo, insulin-like peptide injection reduces blood glucose levels in two models of zebrafish diabetes (streptozotocin- and glucose-induced). Also shorter swimming distance of zebrafish larvae, an effect which is not observed with human insulin. The sequence is that of Insulin-like peptide 04 from Exaiptasia diaphana (Tropical sea anemone).